Here is a 206-residue protein sequence, read N- to C-terminus: ATP-dependent dethiobiotin synthetase BioD (206 aa).

Residue 12 to 17 (DSGKTL) participates in ATP binding. Thr-16 contacts Mg(2+). Residue Lys-32 is part of the active site. Glu-99 serves as a coordination point for Mg(2+). An ATP-binding site is contributed by 99–102 (EGAG).

Belongs to the dethiobiotin synthetase family. Homodimer. Mg(2+) serves as cofactor.

The protein resides in the cytoplasm. It carries out the reaction (7R,8S)-7,8-diammoniononanoate + CO2 + ATP = (4R,5S)-dethiobiotin + ADP + phosphate + 3 H(+). It functions in the pathway cofactor biosynthesis; biotin biosynthesis; biotin from 7,8-diaminononanoate: step 1/2. Functionally, catalyzes a mechanistically unusual reaction, the ATP-dependent insertion of CO2 between the N7 and N8 nitrogen atoms of 7,8-diaminopelargonic acid (DAPA, also called 7,8-diammoniononanoate) to form a ureido ring. This is ATP-dependent dethiobiotin synthetase BioD from Cytophaga hutchinsonii (strain ATCC 33406 / DSM 1761 / CIP 103989 / NBRC 15051 / NCIMB 9469 / D465).